Reading from the N-terminus, the 94-residue chain is ATP synthase subunit c (94 aa).

2 helical membrane passes run 15–35 (IGVG…WGLI) and 58–78 (FIFA…AMWF).

This sequence belongs to the ATPase C chain family. As to quaternary structure, F-type ATPases have 2 components, F(1) - the catalytic core - and F(0) - the membrane proton channel. F(1) has five subunits: alpha(3), beta(3), gamma(1), delta(1), epsilon(1). F(0) has three main subunits: a(1), b(2) and c(10-14). The alpha and beta chains form an alternating ring which encloses part of the gamma chain. F(1) is attached to F(0) by a central stalk formed by the gamma and epsilon chains, while a peripheral stalk is formed by the delta and b chains.

It is found in the cell inner membrane. F(1)F(0) ATP synthase produces ATP from ADP in the presence of a proton or sodium gradient. F-type ATPases consist of two structural domains, F(1) containing the extramembraneous catalytic core and F(0) containing the membrane proton channel, linked together by a central stalk and a peripheral stalk. During catalysis, ATP synthesis in the catalytic domain of F(1) is coupled via a rotary mechanism of the central stalk subunits to proton translocation. Its function is as follows. Key component of the F(0) channel; it plays a direct role in translocation across the membrane. A homomeric c-ring of between 10-14 subunits forms the central stalk rotor element with the F(1) delta and epsilon subunits. This Hydrogenovibrio crunogenus (strain DSM 25203 / XCL-2) (Thiomicrospira crunogena) protein is ATP synthase subunit c.